The sequence spans 351 residues: Dihydroorotate dehydrogenase (quinone) (351 aa).

FMN-binding positions include 67–71 and threonine 91; that span reads AGFDK. A substrate-binding site is contributed by lysine 71. 116–120 lines the substrate pocket; it reads NAMGF. The FMN site is built by asparagine 145 and asparagine 178. A substrate-binding site is contributed by asparagine 178. Serine 181 serves as the catalytic Nucleophile. Asparagine 183 is a substrate binding site. Residues lysine 214 and threonine 242 each contribute to the FMN site. 243–244 serves as a coordination point for substrate; the sequence is NT. FMN contacts are provided by residues glycine 262, glycine 291, and 312–313; that span reads YS.

This sequence belongs to the dihydroorotate dehydrogenase family. Type 2 subfamily. Monomer. FMN serves as cofactor.

Its subcellular location is the cell membrane. The catalysed reaction is (S)-dihydroorotate + a quinone = orotate + a quinol. It participates in pyrimidine metabolism; UMP biosynthesis via de novo pathway; orotate from (S)-dihydroorotate (quinone route): step 1/1. Catalyzes the conversion of dihydroorotate to orotate with quinone as electron acceptor. This is Dihydroorotate dehydrogenase (quinone) (pyrD) from Helicobacter pylori (strain J99 / ATCC 700824) (Campylobacter pylori J99).